Here is a 622-residue protein sequence, read N- to C-terminus: Threonine--tRNA ligase (622 aa).

The tract at residues 1-141 is editing domain; it reads MKTLLIHSDY…SRKITTERKE (141 aa). Residues 199-498 are catalytic; sequence PHVKYIKEKE…TLENKPPALP (300 aa). C291, H343, and H467 together coordinate Zn(2+).

This sequence belongs to the class-II aminoacyl-tRNA synthetase family. Homodimer. Zn(2+) is required as a cofactor.

The protein resides in the cytoplasm. It catalyses the reaction tRNA(Thr) + L-threonine + ATP = L-threonyl-tRNA(Thr) + AMP + diphosphate + H(+). Catalyzes the attachment of threonine to tRNA(Thr) in a two-step reaction: L-threonine is first activated by ATP to form Thr-AMP and then transferred to the acceptor end of tRNA(Thr). Also edits incorrectly charged L-seryl-tRNA(Thr). The protein is Threonine--tRNA ligase of Methanococcus maripaludis (strain C7 / ATCC BAA-1331).